We begin with the raw amino-acid sequence, 263 residues long: Probable adenylate kinase 7, mitochondrial (263 aa).

The N-terminal 30 residues, 1–30 (MAWLSRVRGVSPVTRLAAIRRSFGSAAALE), are a transit peptide targeting the mitochondrion. 72–77 (GAWRHV) provides a ligand contact to ATP. The segment at 92–121 (SMGSLVRQELNPRSSLYKEIASAVNERKLV) is NMP. Residues R98, 119–121 (KLV), 149–152 (GIPR), Q156, and R206 each bind AMP. Position 234 (G234) interacts with ATP.

This sequence belongs to the adenylate kinase family. Monomer.

The protein resides in the mitochondrion. The catalysed reaction is AMP + ATP = 2 ADP. Its function is as follows. Catalyzes the reversible transfer of the terminal phosphate group between ATP and AMP. Plays an important role in cellular energy homeostasis and in adenine nucleotide metabolism. This chain is Probable adenylate kinase 7, mitochondrial, found in Arabidopsis thaliana (Mouse-ear cress).